Here is a 325-residue protein sequence, read N- to C-terminus: Beta-ketoacyl-[acyl-carrier-protein] synthase III (325 aa).

Active-site residues include cysteine 119 and histidine 252. The interval glutamine 253 to arginine 257 is ACP-binding. Asparagine 282 is an active-site residue.

This sequence belongs to the thiolase-like superfamily. FabH family. As to quaternary structure, homodimer.

Its subcellular location is the cytoplasm. The catalysed reaction is malonyl-[ACP] + acetyl-CoA + H(+) = 3-oxobutanoyl-[ACP] + CO2 + CoA. Its pathway is lipid metabolism; fatty acid biosynthesis. Its function is as follows. Catalyzes the condensation reaction of fatty acid synthesis by the addition to an acyl acceptor of two carbons from malonyl-ACP. Catalyzes the first condensation reaction which initiates fatty acid synthesis and may therefore play a role in governing the total rate of fatty acid production. Possesses both acetoacetyl-ACP synthase and acetyl transacylase activities. Its substrate specificity determines the biosynthesis of branched-chain and/or straight-chain of fatty acids. This is Beta-ketoacyl-[acyl-carrier-protein] synthase III from Polaromonas naphthalenivorans (strain CJ2).